A 445-amino-acid chain; its full sequence is DDB1- and CUL4-associated factor 13 (445 aa).

WD repeat units lie at residues 64-104, 107-146, 154-191, 194-234, 236-276, 280-319, and 323-362; these read GHRD…CSRT, AHDGFVRGLCVRFCGTSFFTVGDDKTVKQWSMESPGYGEK, LGKTVFTGIDHHMNDAIFATCGQQVDIWDEQRSAPMRS, WGVD…PLKK, ILEM…GPVK, DHVSAVLDVDYSPTGKEFVSASFDKSIRIFPVQSGHSREV, and KRMQHVTCVRWSADNKYVLCGSDEMNIRIWKANASEKLGL. Residues 353-441 form a required for nucleolar location region; the sequence is KANASEKLGL…IPSEKKKHVL (89 aa). Composition is skewed to basic residues over residues 413–426 and 436–445; these read ARRKKDVNRRKHSK and KKKHVLAVVE. Residues 413–445 form a disordered region; the sequence is ARRKKDVNRRKHSKPGSVPIPSEKKKHVLAVVE.

It belongs to the WD repeat DCAF13/WDSOF1 family. As to quaternary structure, part of the small subunit (SSU) processome, composed of more than 70 proteins and the RNA chaperone small nucleolar RNA (snoRNA) U3. Component of the DCX(DCAF13) E3 ubiquitin ligase complex, at least composed of CUL4 (CUL4A or CUL4B), DDB1, DCAF13 and RBX1.

It is found in the nucleus. It localises to the nucleolus. The protein operates within protein modification; protein ubiquitination. Part of the small subunit (SSU) processome, first precursor of the small eukaryotic ribosomal subunit. During the assembly of the SSU processome in the nucleolus, many ribosome biogenesis factors, an RNA chaperone and ribosomal proteins associate with the nascent pre-rRNA and work in concert to generate RNA folding, modifications, rearrangements and cleavage as well as targeted degradation of pre-ribosomal RNA by the RNA exosome. Functionally, substrate-recognition component of a DCX (DDB1-CUL4-X-box) E3 ubiquitin-protein ligase complex. The protein is DDB1- and CUL4-associated factor 13 (dcaf13) of Xenopus tropicalis (Western clawed frog).